An 827-amino-acid chain; its full sequence is Periplasmic nitrate reductase (827 aa).

The segment at residues methionine 1–alanine 34 is a signal peptide (tat-type signal). Positions isoleucine 36–aspartate 92 constitute a 4Fe-4S Mo/W bis-MGD-type domain. Residues cysteine 43, cysteine 46, cysteine 50, and cysteine 78 each coordinate [4Fe-4S] cluster. Mo-bis(molybdopterin guanine dinucleotide) is bound by residues lysine 80, glutamine 148, asparagine 173, cysteine 177, tryptophan 210–methionine 217, serine 241–histidine 245, glutamine 260–aspartate 262, methionine 371, glutamine 375, asparagine 481, serine 507–aspartate 508, lysine 530, aspartate 557, and threonine 717–serine 726. Phenylalanine 793 is a binding site for substrate. Mo-bis(molybdopterin guanine dinucleotide)-binding residues include asparagine 801 and lysine 818.

This sequence belongs to the prokaryotic molybdopterin-containing oxidoreductase family. NasA/NapA/NarB subfamily. In terms of assembly, component of the periplasmic nitrate reductase NapAB complex composed of NapA and NapB. Requires [4Fe-4S] cluster as cofactor. The cofactor is Mo-bis(molybdopterin guanine dinucleotide). In terms of processing, predicted to be exported by the Tat system. The position of the signal peptide cleavage has not been experimentally proven.

Its subcellular location is the periplasm. The catalysed reaction is 2 Fe(II)-[cytochrome] + nitrate + 2 H(+) = 2 Fe(III)-[cytochrome] + nitrite + H2O. Catalytic subunit of the periplasmic nitrate reductase complex NapAB. Receives electrons from NapB and catalyzes the reduction of nitrate to nitrite. The protein is Periplasmic nitrate reductase of Paramagnetospirillum magnetotacticum (Aquaspirillum magnetotacticum).